The primary structure comprises 112 residues: Putative pterin-4-alpha-carbinolamine dehydratase (112 aa).

The protein belongs to the pterin-4-alpha-carbinolamine dehydratase family.

It catalyses the reaction (4aS,6R)-4a-hydroxy-L-erythro-5,6,7,8-tetrahydrobiopterin = (6R)-L-erythro-6,7-dihydrobiopterin + H2O. This is Putative pterin-4-alpha-carbinolamine dehydratase from Shewanella loihica (strain ATCC BAA-1088 / PV-4).